The chain runs to 121 residues: Large ribosomal subunit protein uL14 (121 aa).

It belongs to the universal ribosomal protein uL14 family. As to quaternary structure, part of the 50S ribosomal subunit. Forms a cluster with proteins L3 and L19. In the 70S ribosome, L14 and L19 interact and together make contacts with the 16S rRNA in bridges B5 and B8.

In terms of biological role, binds to 23S rRNA. Forms part of two intersubunit bridges in the 70S ribosome. This chain is Large ribosomal subunit protein uL14, found in Prochlorococcus marinus (strain MIT 9301).